The sequence spans 393 residues: Phosphoglycerate kinase (393 aa).

Residues D21 to N23, H59 to R62, R118, and R151 contribute to the substrate site. ATP contacts are provided by residues K201, E323, and G349–T352.

This sequence belongs to the phosphoglycerate kinase family. Monomer.

Its subcellular location is the cytoplasm. The catalysed reaction is (2R)-3-phosphoglycerate + ATP = (2R)-3-phospho-glyceroyl phosphate + ADP. The protein operates within carbohydrate degradation; glycolysis; pyruvate from D-glyceraldehyde 3-phosphate: step 2/5. This is Phosphoglycerate kinase from Pelotomaculum thermopropionicum (strain DSM 13744 / JCM 10971 / SI).